A 342-amino-acid chain; its full sequence is Non-homologous end-joining protein 1 (342 aa).

Helical transmembrane passes span 27–47 (LLLFLPMSSPTTIVMIVLVSL) and 129–149 (MFYMILQSLCMLLLKLVNLST). An interaction with LIF1 region spans residues 173 to 342 (LRDLDGGSKV…RKFGKVRIKN (170 aa)). Positions 270 to 342 (ADPTNEARPN…RKFGKVRIKN (73 aa)) are disordered. Residues 286-296 (PKTDFKPKSRE) are compositionally biased toward basic and acidic residues. Residues 297-312 (SSTSSQLRLENFSESE) show a composition bias toward polar residues. Over residues 331 to 342 (KKRKFGKVRIKN) the composition is skewed to basic residues.

It belongs to the XRCC4-XLF family. XLF subfamily. In terms of assembly, interacts (via C-terminus) with LIF1 (via N-terminus); the interaction is direct. Interacts with DNL4.

Its subcellular location is the cytoplasm. The protein resides in the nucleus membrane. In terms of biological role, involved in non-homologous end joining (NHEJ). Facilitates the transport of LIF1 into the nucleus, where it can interact with DNA ligase DNL4 to repair double-strand breaks (DSB). Mediates mating-type regulation of NHEJ. Prevents chromosome circularisation by NHEJ in absence of telomerase. This Saccharomyces cerevisiae (strain ATCC 204508 / S288c) (Baker's yeast) protein is Non-homologous end-joining protein 1 (NEJ1).